Consider the following 597-residue polypeptide: HECT-type ubiquitin ligase-interacting protein creD (597 aa).

3 disordered regions span residues Glu-375 to Ser-398, Ala-439 to Pro-492, and Ser-576 to Ala-597. Positions Gly-452 to Ala-466 are enriched in polar residues. Residues Leu-472 to Asp-483 are compositionally biased toward basic and acidic residues.

Belongs to the arrestin family. Interacts with hulA.

Component of the regulatory network controlling carbon source utilization through ubiquitination and deubiquitination involving creA, creB, creC, creD and acrB. May be involved in signaling by recognizing appropriately phosphorylated substrates via its arrestin domains and then recruit a HECT-type ubiquitin ligase such as hulA, leading to ubiquitination of the substrate, providing a link between ubiquitination and phosphorylation in protein regulation and stability. In Emericella nidulans (strain FGSC A4 / ATCC 38163 / CBS 112.46 / NRRL 194 / M139) (Aspergillus nidulans), this protein is HECT-type ubiquitin ligase-interacting protein creD (creD).